The following is a 123-amino-acid chain: Large ribosomal subunit protein uL14 (123 aa).

This sequence belongs to the universal ribosomal protein uL14 family. In terms of assembly, part of the 50S ribosomal subunit. Forms a cluster with proteins L3 and L19. In the 70S ribosome, L14 and L19 interact and together make contacts with the 16S rRNA in bridges B5 and B8.

Binds to 23S rRNA. Forms part of two intersubunit bridges in the 70S ribosome. This chain is Large ribosomal subunit protein uL14, found in Actinobacillus pleuropneumoniae serotype 7 (strain AP76).